Here is a 383-residue protein sequence, read N- to C-terminus: Ribosomal RNA large subunit methyltransferase G (383 aa).

The protein belongs to the methyltransferase superfamily. RlmG family.

The protein resides in the cytoplasm. The catalysed reaction is guanosine(1835) in 23S rRNA + S-adenosyl-L-methionine = N(2)-methylguanosine(1835) in 23S rRNA + S-adenosyl-L-homocysteine + H(+). Specifically methylates the guanine in position 1835 (m2G1835) of 23S rRNA. This chain is Ribosomal RNA large subunit methyltransferase G, found in Vibrio atlanticus (strain LGP32) (Vibrio splendidus (strain Mel32)).